Consider the following 452-residue polypeptide: tRNA modification GTPase MnmE (452 aa).

(6S)-5-formyl-5,6,7,8-tetrahydrofolate-binding residues include Arg21, Glu82, and Arg121. The region spanning 217-373 (GINTTIIGKP…LENKIIEMFN (157 aa)) is the TrmE-type G domain. Residue Asn227 participates in K(+) binding. Residues 227–232 (NVGKSS), 246–252 (TDIPGTT), and 271–274 (DTAG) each bind GTP. Residue Ser231 participates in Mg(2+) binding. K(+) is bound by residues Thr246, Ile248, and Thr251. Position 252 (Thr252) interacts with Mg(2+). Lys452 provides a ligand contact to (6S)-5-formyl-5,6,7,8-tetrahydrofolate.

It belongs to the TRAFAC class TrmE-Era-EngA-EngB-Septin-like GTPase superfamily. TrmE GTPase family. As to quaternary structure, homodimer. Heterotetramer of two MnmE and two MnmG subunits. K(+) serves as cofactor.

Its subcellular location is the cytoplasm. In terms of biological role, exhibits a very high intrinsic GTPase hydrolysis rate. Involved in the addition of a carboxymethylaminomethyl (cmnm) group at the wobble position (U34) of certain tRNAs, forming tRNA-cmnm(5)s(2)U34. This is tRNA modification GTPase MnmE from Finegoldia magna (strain ATCC 29328 / DSM 20472 / WAL 2508) (Peptostreptococcus magnus).